A 395-amino-acid chain; its full sequence is Succinyl-diaminopimelate desuccinylase (395 aa).

Residue His74 participates in Zn(2+) binding. Asp76 is a catalytic residue. Asp107 provides a ligand contact to Zn(2+). The active-site Proton acceptor is Glu141. Zn(2+)-binding residues include Glu142, Glu170, and His368.

Belongs to the peptidase M20A family. DapE subfamily. Homodimer. It depends on Zn(2+) as a cofactor. Co(2+) serves as cofactor.

The catalysed reaction is N-succinyl-(2S,6S)-2,6-diaminopimelate + H2O = (2S,6S)-2,6-diaminopimelate + succinate. It participates in amino-acid biosynthesis; L-lysine biosynthesis via DAP pathway; LL-2,6-diaminopimelate from (S)-tetrahydrodipicolinate (succinylase route): step 3/3. Functionally, catalyzes the hydrolysis of N-succinyl-L,L-diaminopimelic acid (SDAP), forming succinate and LL-2,6-diaminopimelate (DAP), an intermediate involved in the bacterial biosynthesis of lysine and meso-diaminopimelic acid, an essential component of bacterial cell walls. In Chelativorans sp. (strain BNC1), this protein is Succinyl-diaminopimelate desuccinylase.